The following is a 151-amino-acid chain: Large ribosomal subunit protein uL13 (151 aa).

Belongs to the universal ribosomal protein uL13 family. Part of the 50S ribosomal subunit.

Functionally, this protein is one of the early assembly proteins of the 50S ribosomal subunit, although it is not seen to bind rRNA by itself. It is important during the early stages of 50S assembly. This is Large ribosomal subunit protein uL13 from Microcystis aeruginosa (strain NIES-843 / IAM M-2473).